The following is a 440-amino-acid chain: Chromosome partition protein MukF (440 aa).

The segment at 208–236 (LDETSGNLRELQDTLNAAGDKLQSQLLRI) is leucine-zipper.

Belongs to the MukF family. Interacts, and probably forms a ternary complex, with MukE and MukB via its C-terminal region. The complex formation is stimulated by calcium or magnesium. It is required for an interaction between MukE and MukB.

It is found in the cytoplasm. The protein resides in the nucleoid. Its function is as follows. Involved in chromosome condensation, segregation and cell cycle progression. May participate in facilitating chromosome segregation by condensation DNA from both sides of a centrally located replisome during cell division. Not required for mini-F plasmid partitioning. Probably acts via its interaction with MukB and MukE. Overexpression results in anucleate cells. It has a calcium binding activity. This is Chromosome partition protein MukF from Histophilus somni (strain 129Pt) (Haemophilus somnus).